The chain runs to 310 residues: tRNA-cytidine(32) 2-sulfurtransferase (310 aa).

The PP-loop motif motif lies at 48 to 53; sequence SGGKDS. Cys123, Cys126, and Cys214 together coordinate [4Fe-4S] cluster.

The protein belongs to the TtcA family. As to quaternary structure, homodimer. Mg(2+) is required as a cofactor. The cofactor is [4Fe-4S] cluster.

The protein resides in the cytoplasm. The enzyme catalyses cytidine(32) in tRNA + S-sulfanyl-L-cysteinyl-[cysteine desulfurase] + AH2 + ATP = 2-thiocytidine(32) in tRNA + L-cysteinyl-[cysteine desulfurase] + A + AMP + diphosphate + H(+). The protein operates within tRNA modification. In terms of biological role, catalyzes the ATP-dependent 2-thiolation of cytidine in position 32 of tRNA, to form 2-thiocytidine (s(2)C32). The sulfur atoms are provided by the cysteine/cysteine desulfurase (IscS) system. This is tRNA-cytidine(32) 2-sulfurtransferase from Vibrio cholerae serotype O1 (strain ATCC 39315 / El Tor Inaba N16961).